We begin with the raw amino-acid sequence, 584 residues long: Cation channel sperm-associated protein 2 (584 aa).

At 1–106 (MAHERGHLQL…LWAGWVLDSS (106 aa)) the chain is on the cytoplasmic side. Residues 107–129 (IFSNFIISLIFLNTFVLMVEIEL) form a helical membrane-spanning segment. Over 130–138 (MNSTNTSLW) the chain is Extracellular. The helical transmembrane segment at 139-164 (PLKLALEVTDWFILLSFIVEILLMWL) threads the bilayer. The Cytoplasmic portion of the chain corresponds to 165–173 (ASFFLFWKN). Residues 174 to 198 (AWSVFDFVVTMLSLLPEFVVLIGVS) form a helical membrane-spanning segment. The Extracellular segment spans residues 199-201 (ADS). The chain crosses the membrane as a helical span at residues 202 to 220 (VWLQLLRVSRVLRSLKLFA). The Cytoplasmic portion of the chain corresponds to 221-237 (RFPQIKVILLALVRALK). A helical transmembrane segment spans residues 238–260 (SMTFLLMLLLIFFYVFAVAGVYF). The Extracellular portion of the chain corresponds to 261 to 279 (FKEYSRSTIENLEYNMFFS). The segment at residues 280 to 292 (DLLNSLVTVFILF) is an intramembrane region (helical; Pore-forming). The Extracellular segment spans residues 293–312 (TLDHWYAVLQDVWKVPEASR). A helical transmembrane segment spans residues 313–339 (VFSSIYVILWLLLGSIIFRNIIVAMMV). Topologically, residues 340–584 (TNFQNIRNEL…VQALMNFEDK (245 aa)) are cytoplasmic. The span at 376–386 (SESLRGTSQGK) shows a compositional bias: polar residues. 2 disordered regions span residues 376-460 (SESL…KGYT) and 480-510 (AGKA…HDEA). Composition is skewed to acidic residues over residues 390–418 (DITE…EEKS) and 426–443 (EKND…EEKS). Composition is skewed to basic and acidic residues over residues 444–460 (DVEK…KGYT) and 483–496 (AENE…KEKA).

Belongs to the cation channel sperm-associated (TC 1.A.1.19) family. In terms of assembly, component of the CatSper complex or CatSpermasome composed of the core pore-forming members CATSPER1, CATSPER2, CATSPER3 and CATSPER4 as well as auxiliary members CATSPERB, CATSPERG, CATSPERD, CATSPERE, CATSPERZ, C2CD6/CATSPERT, SLCO6C1, TMEM249, TMEM262 and EFCAB9. HSPA1 may be an additional auxiliary complex member. The core complex members CATSPER1, CATSPER2, CATSPER3 and CATSPER4 form a heterotetrameric channel. The auxiliary CATSPERB, CATSPERG, CATSPERD and CATSPERE subunits form a pavilion-like structure over the pore which stabilizes the complex through interactions with CATSPER4, CATSPER3, CATSPER1 and CATSPER2 respectively. SLCO6C1 interacts with CATSPERE and TMEM262/CATSPERH interacts with CATSPERB, further stabilizing the complex. C2CD6/CATSPERT interacts at least with CATSPERD and is required for targeting the CatSper complex in the flagellar membrane. Interacts with Ca(v)3.3/CACNA1I, leading to suppression of T-type calcium channel activity.

The protein resides in the cell projection. It is found in the cilium. Its subcellular location is the flagellum membrane. The catalysed reaction is Ca(2+)(in) = Ca(2+)(out). With respect to regulation, activated by intracellular alkalinization. Functionally, pore-forming subunit of the CatSper complex, a sperm-specific voltage-gated calcium channel that plays a central role in sperm cell hyperactivation. Controls calcium entry to mediate the hyperactivated motility, a step needed for sperm motility which is essential late in the preparation of sperm for fertilization. The protein is Cation channel sperm-associated protein 2 (Catsper2) of Rattus norvegicus (Rat).